A 290-amino-acid chain; its full sequence is uncharacterized protein (290 aa).

This is an uncharacterized protein from Escherichia phage lambda (Bacteriophage lambda).